The chain runs to 1268 residues: uncharacterized protein (1268 aa).

The span at 191-206 shows a compositional bias: low complexity; sequence KIVSVKPSKSSQQVDV. 2 disordered regions span residues 191 to 235 and 253 to 273; these read KIVS…SKKK and NCRS…SKGC. Over residues 223-235 the composition is skewed to basic and acidic residues; the sequence is RKPEKSSQDSKKK. Residues 239 to 256 form a CCHC-type zinc finger; the sequence is PTCFYCNKKGHYATNCRS. One can recognise a Reverse transcriptase domain in the interval 465–644; it reads EMGVIVPITY…KQVTFLGFVD (180 aa). In terms of domain architecture, Integrase catalytic spans 844–997; that stretch reads VPEAPWKRIH…TPAECHFGRK (154 aa). A disordered region spans residues 1092-1268; sequence GDYSRSSVNP…RRERVRTTWR (177 aa). Composition is skewed to polar residues over residues 1127–1143 and 1160–1169; these read VTSN…SRIT and GSCSPTNNDV. The span at 1208–1221 shows a compositional bias: low complexity; sequence PSTSTGTPRGSTST. Residues 1222 to 1249 show a composition bias toward polar residues; sequence QLGQASTRNGSRYTASGRNPSCQGNRYS. A compositionally biased stretch (basic and acidic residues) spans 1257–1268; the sequence is TARRERVRTTWR.

This is an uncharacterized protein from Caenorhabditis elegans.